The chain runs to 239 residues: Ribonuclease 3 (239 aa).

Positions 11–133 (HTAIQKKLGY…MFAAVSFDAD (123 aa)) constitute an RNase III domain. E46 contacts Mg(2+). D50 is a catalytic residue. The Mg(2+) site is built by D119 and E122. Residue E122 is part of the active site. The DRBM domain occupies 160-230 (DGKTALQEAL…AKEALKWLEE (71 aa)).

Belongs to the ribonuclease III family. As to quaternary structure, homodimer. Mg(2+) serves as cofactor.

Its subcellular location is the cytoplasm. The catalysed reaction is Endonucleolytic cleavage to 5'-phosphomonoester.. In terms of biological role, digests double-stranded RNA. Involved in the processing of primary rRNA transcript to yield the immediate precursors to the large and small rRNAs (23S and 16S). Processes some mRNAs, and tRNAs when they are encoded in the rRNA operon. Processes pre-crRNA and tracrRNA of type II CRISPR loci if present in the organism. This Neisseria gonorrhoeae (strain NCCP11945) protein is Ribonuclease 3.